A 364-amino-acid polypeptide reads, in one-letter code: Pyrimidine monooxygenase RutA (364 aa).

FMN contacts are provided by residues 49 to 50 (IK), Asn115, Glu124, 140 to 141 (RY), and Ser190.

The protein belongs to the NtaA/SnaA/DszA monooxygenase family. RutA subfamily.

It carries out the reaction uracil + FMNH2 + NADH + O2 = (Z)-3-ureidoacrylate + FMN + NAD(+) + H2O + H(+). The catalysed reaction is thymine + FMNH2 + NADH + O2 = (Z)-2-methylureidoacrylate + FMN + NAD(+) + H2O + H(+). In terms of biological role, catalyzes the pyrimidine ring opening between N-3 and C-4 by an unusual flavin hydroperoxide-catalyzed mechanism, adding oxygen atoms in the process to yield ureidoacrylate peracid, that immediately reacts with FMN forming ureidoacrylate and FMN-N(5)-oxide. The FMN-N(5)-oxide reacts spontaneously with NADH to produce FMN. Requires the flavin reductase RutF to regenerate FMN in vivo. The polypeptide is Pyrimidine monooxygenase RutA (Methylorubrum extorquens (strain ATCC 14718 / DSM 1338 / JCM 2805 / NCIMB 9133 / AM1) (Methylobacterium extorquens)).